A 247-amino-acid polypeptide reads, in one-letter code: Pyrroloquinoline-quinone synthase (247 aa).

The protein belongs to the PqqC family.

The enzyme catalyses 6-(2-amino-2-carboxyethyl)-7,8-dioxo-1,2,3,4,7,8-hexahydroquinoline-2,4-dicarboxylate + 3 O2 = pyrroloquinoline quinone + 2 H2O2 + 2 H2O + H(+). The protein operates within cofactor biosynthesis; pyrroloquinoline quinone biosynthesis. Ring cyclization and eight-electron oxidation of 3a-(2-amino-2-carboxyethyl)-4,5-dioxo-4,5,6,7,8,9-hexahydroquinoline-7,9-dicarboxylic-acid to PQQ. This chain is Pyrroloquinoline-quinone synthase, found in Rhizobium rhizogenes (strain K84 / ATCC BAA-868) (Agrobacterium radiobacter).